Reading from the N-terminus, the 1491-residue chain is Vacuolar protein sorting/targeting protein 10 (1491 aa).

The first 21 residues, 1 to 21 (MKHLKGLLLPALLALASSAAA), serve as a signal peptide directing secretion. Over 22–1354 (KDPLVETTPF…DFKKNHGVGG (1333 aa)) the chain is Lumenal. The BNR 1 repeat unit spans residues 97–107 (WITYDQGENWD). N285 and N309 each carry an N-linked (GlcNAc...) asparagine glycan. 2 BNR repeats span residues 364–374 (ISFDDGRSFEK) and 426–436 (YVSDDAGLTWE). A disordered region spans residues 640 to 667 (IPGNQCKGETERDKQVERECKDAERPRP). A compositionally biased stretch (basic and acidic residues) spans 647–667 (GETERDKQVERECKDAERPRP). One copy of the BNR 4 repeat lies at 719-730 (YITHDHGKKWKK). N-linked (GlcNAc...) asparagine glycosylation is present at N970. The segment at 1018–1047 (KKKQSRITHNDGADWEPLQAPEKDSDDKPY) is disordered. Basic and acidic residues predominate over residues 1038–1047 (PEKDSDDKPY). 2 BNR repeats span residues 1102–1112 (FMTTDAGITWK) and 1143–1153 (YYSVDSGAKWD). A glycan (N-linked (GlcNAc...) asparagine) is linked at N1265. Residues 1355–1375 (FTLFLAIVLPFAAAAGVGYWV) traverse the membrane as a helical segment. Topologically, residues 1376–1405 (WRNWDGKFGRIRLGEPGGGSAFDSDAPWVR) are cytoplasmic. The chain crosses the membrane as a helical span at residues 1406-1426 (WPIAAVSGLVAVGAALPLVVG). The Lumenal segment spans residues 1427-1491 (SVWRWVVGRM…LGDEESDEDV (65 aa)). Residues 1464-1491 (FARGRGEYSVVDPDEGELLGDEESDEDV) are disordered. Residues 1475 to 1491 (DPDEGELLGDEESDEDV) are compositionally biased toward acidic residues.

This sequence belongs to the VPS10-related sortilin family.

Its subcellular location is the golgi apparatus. It is found in the trans-Golgi network membrane. It localises to the prevacuolar compartment membrane. Its function is as follows. Functions as a sorting receptor in the Golgi compartment required for the intracellular sorting and delivery of soluble vacuolar proteins, like carboxypeptidase Y (CPY) and proteinase A. Executes multiple rounds of sorting by cycling between the late Golgi and a prevacuolar endosome-like compartment. This Pyrenophora tritici-repentis (strain Pt-1C-BFP) (Wheat tan spot fungus) protein is Vacuolar protein sorting/targeting protein 10 (vps10).